The following is a 184-amino-acid chain: UPF0398 protein BAA_1648 (184 aa).

It belongs to the UPF0398 family.

The polypeptide is UPF0398 protein BAA_1648 (Bacillus anthracis (strain A0248)).